The following is a 120-amino-acid chain: Large ribosomal subunit protein bL19 (120 aa).

The protein belongs to the bacterial ribosomal protein bL19 family.

This protein is located at the 30S-50S ribosomal subunit interface and may play a role in the structure and function of the aminoacyl-tRNA binding site. This is Large ribosomal subunit protein bL19 from Thermosynechococcus vestitus (strain NIES-2133 / IAM M-273 / BP-1).